A 193-amino-acid polypeptide reads, in one-letter code: Zinc finger protein 740 (193 aa).

Positions serine 33–serine 75 are disordered. Residue lysine 34 forms a Glycyl lysine isopeptide (Lys-Gly) (interchain with G-Cter in SUMO2) linkage. Position 44 is a phosphoserine (serine 44). Over residues histidine 55–aspartate 69 the composition is skewed to basic and acidic residues. C2H2-type zinc fingers lie at residues phenylalanine 101–histidine 123 and phenylalanine 129–histidine 151. The C2H2-type 3; atypical zinc finger occupies tyrosine 157–cysteine 179.

It belongs to the krueppel C2H2-type zinc-finger protein family.

The protein resides in the nucleus. Functionally, may be involved in transcriptional regulation. In Homo sapiens (Human), this protein is Zinc finger protein 740 (ZNF740).